We begin with the raw amino-acid sequence, 57 residues long: Insulin (57 aa).

Cystine bridges form between Cys12/Cys43, Cys24/Cys56, and Cys42/Cys47.

It belongs to the insulin family. As to quaternary structure, heterodimer of a B chain and an A chain linked by two disulfide bonds.

The protein resides in the secreted. Insulin decreases blood glucose concentration. It increases cell permeability to monosaccharides, amino acids and fatty acids. It accelerates glycolysis, the pentose phosphate cycle, and glycogen synthesis in liver. This Lampetra fluviatilis (European river lamprey) protein is Insulin (ins).